The sequence spans 313 residues: tRNA-cytidine(32) 2-sulfurtransferase (313 aa).

Positions 54–59 (SGGKDS) match the PP-loop motif motif. [4Fe-4S] cluster is bound by residues C129, C132, and C220.

The protein belongs to the TtcA family. Homodimer. It depends on Mg(2+) as a cofactor. [4Fe-4S] cluster is required as a cofactor.

The protein resides in the cytoplasm. The catalysed reaction is cytidine(32) in tRNA + S-sulfanyl-L-cysteinyl-[cysteine desulfurase] + AH2 + ATP = 2-thiocytidine(32) in tRNA + L-cysteinyl-[cysteine desulfurase] + A + AMP + diphosphate + H(+). The protein operates within tRNA modification. Its function is as follows. Catalyzes the ATP-dependent 2-thiolation of cytidine in position 32 of tRNA, to form 2-thiocytidine (s(2)C32). The sulfur atoms are provided by the cysteine/cysteine desulfurase (IscS) system. The polypeptide is tRNA-cytidine(32) 2-sulfurtransferase (Methylibium petroleiphilum (strain ATCC BAA-1232 / LMG 22953 / PM1)).